Consider the following 580-residue polypeptide: Transcription factor coe2-B (580 aa).

Positions 60–63 (RKSN) are interaction with DNA. The C5-type zinc-finger motif lies at 148 to 167 (CRVLLTHEVMCSRCCEKKSC). Interaction with DNA regions lie at residues 194–201 (NCLKTAGN) and 233–236 (NNSK). The IPT/TIG domain occupies 259–341 (PCIKAISPSE…CKGAPGRFIY (83 aa)). The interval 455–492 (IRNTSSISPRGYSSSSTPQQSNYSTPSNSMNGYSNVPM) is disordered. The segment covering 459-481 (SSISPRGYSSSSTPQQSNYSTPS) has biased composition (low complexity). The span at 482 to 492 (NSMNGYSNVPM) shows a compositional bias: polar residues.

Belongs to the COE family. As to expression, in embryos, expressed in precursors of primary neurons. In adults, expressed at high levels in the brain, and at low levels in the somatic muscles, testis, and possibly the spleen.

Its subcellular location is the nucleus. Functionally, may play a pivotal role in the transcriptional cascade that specifies primary neurons in embryos. Stabilizes the higher neural potential of selected progenitor cells that express neurog2/X-ngnr-1 by maintaining Delta-Notch signaling. Thus ensures the transition between neural competence and irreversible commitment to a neural fate. Also promotes neuronal differentiation by activating neurod1 expression, directly or indirectly. This is Transcription factor coe2-B from Xenopus laevis (African clawed frog).